Consider the following 215-residue polypeptide: MSVPQIQVEEVSEKDRPAGAAVPPDDHLLSLKALTEKLRLETRRPSYLEWQARLEEQTWPFPRPAAQQEASLEQGACGGGEPLMPLKEPRDLLPPSASAGRGDRPLTTGKLEGFQSIDEAIAWLRKELAEMRLQDQQLARQLMRLRGDINKLKIEQTCRLHRRMLNDAAFELEERDELSDLFCDSPLASSFSLSMPLKLIGVTKMNINSRRFSLC.

Disordered stretches follow at residues 1 to 26 and 63 to 109; these read MSVP…PPDD and RPAA…LTTG. Residues 124–157 adopt a coiled-coil conformation; the sequence is LRKELAEMRLQDQQLARQLMRLRGDINKLKIEQT.

It belongs to the FAM167 (SEC) family.

This Mus musculus (Mouse) protein is Protein FAM167A (Fam167a).